Here is a 309-residue protein sequence, read N- to C-terminus: Serpentine receptor class gamma-47 (309 aa).

5 helical membrane-spanning segments follow: residues 22–42 (IVQMFYGTITVVFMLILLFLF), 140–160 (FKLYYVILCGISIFFTSVLPL), 190–210 (IYSSVYFIILLLVGIISIFYI), 230–250 (LITLVYGFLYSGILLWSILMA), and 272–292 (ISSDLITLSLPYILLIFDVGI).

The protein belongs to the nematode receptor-like protein srg family.

The protein localises to the membrane. This Caenorhabditis elegans protein is Serpentine receptor class gamma-47 (srg-47).